The chain runs to 143 residues: Large ribosomal subunit protein uL11 (143 aa).

This sequence belongs to the universal ribosomal protein uL11 family. In terms of assembly, part of the ribosomal stalk of the 50S ribosomal subunit. Interacts with L10 and the large rRNA to form the base of the stalk. L10 forms an elongated spine to which L12 dimers bind in a sequential fashion forming a multimeric L10(L12)X complex. One or more lysine residues are methylated.

Its function is as follows. Forms part of the ribosomal stalk which helps the ribosome interact with GTP-bound translation factors. The chain is Large ribosomal subunit protein uL11 from Thioalkalivibrio sulfidiphilus (strain HL-EbGR7).